Consider the following 101-residue polypeptide: Early E3A 11.6 kDa glycoprotein (101 aa).

An N-linked (GlcNAc...) asparagine; by host glycan is attached at Asn-14. Residues 41–62 traverse the membrane as a helical segment; that stretch reads MWWFSIALMFVCLIIMWLICCL.

It belongs to the adenoviridae E3A-1 family. Post-translationally, N-glycosylated and probably also O-glycosylated.

It localises to the host nucleus membrane. The sequence is that of Early E3A 11.6 kDa glycoprotein from Human adenovirus C serotype 6 (HAdV-6).